The sequence spans 343 residues: ATP-dependent (S)-NAD(P)H-hydrate dehydratase (343 aa).

Residues 1–42 (MAVCPYGAAAVVMALLSAAIAFHCSPLLAVLQRALSLHTAHA) constitute a mitochondrion transit peptide. One can recognise a YjeF C-terminal domain in the interval 49-340 (LFQLVRNIVP…AEVGAAFSKL (292 aa)). K63 bears the N6-acetyllysine mark. At Y81 the chain carries Phosphotyrosine. Residues G149 and 202-208 (NHVEFSR) contribute to the (6S)-NADPHX site. ATP is bound by residues 242–246 (KGEQD) and 261–270 (GSSRRCGGQG). (6S)-NADPHX is bound at residue D271.

This sequence belongs to the NnrD/CARKD family. The cofactor is Mg(2+).

It is found in the mitochondrion. The enzyme catalyses (6S)-NADHX + ATP = ADP + phosphate + NADH + H(+). The catalysed reaction is (6S)-NADPHX + ATP = ADP + phosphate + NADPH + H(+). Catalyzes the dehydration of the S-form of NAD(P)HX at the expense of ATP, which is converted to ADP. Together with NAD(P)HX epimerase, which catalyzes the epimerization of the S- and R-forms, the enzyme allows the repair of both epimers of NAD(P)HX, a damaged form of NAD(P)H that is a result of enzymatic or heat-dependent hydration. This Rattus norvegicus (Rat) protein is ATP-dependent (S)-NAD(P)H-hydrate dehydratase.